Here is a 651-residue protein sequence, read N- to C-terminus: Acetyl-coenzyme A synthetase (651 aa).

CoA is bound by residues 189-192 (RGGK), Thr311, and Asn335. Residues 387–389 (GEP), 411–416 (DTWWQT), Asp500, and Arg515 each bind ATP. Ser523 is a CoA binding site. Residue Arg526 coordinates ATP. Mg(2+) contacts are provided by Val537, His539, and Val542. Arg586 provides a ligand contact to CoA. Lys611 is modified (N6-acetyllysine).

Belongs to the ATP-dependent AMP-binding enzyme family. It depends on Mg(2+) as a cofactor. Post-translationally, acetylated. Deacetylation by the SIR2-homolog deacetylase activates the enzyme.

The catalysed reaction is acetate + ATP + CoA = acetyl-CoA + AMP + diphosphate. Catalyzes the conversion of acetate into acetyl-CoA (AcCoA), an essential intermediate at the junction of anabolic and catabolic pathways. AcsA undergoes a two-step reaction. In the first half reaction, AcsA combines acetate with ATP to form acetyl-adenylate (AcAMP) intermediate. In the second half reaction, it can then transfer the acetyl group from AcAMP to the sulfhydryl group of CoA, forming the product AcCoA. This Brucella abortus (strain S19) protein is Acetyl-coenzyme A synthetase.